The sequence spans 367 residues: Alanine racemase (367 aa).

The Proton acceptor; specific for D-alanine role is filled by K40. K40 carries the N6-(pyridoxal phosphate)lysine modification. R136 is a substrate binding site. The active-site Proton acceptor; specific for L-alanine is the Y263. A substrate-binding site is contributed by M310.

The protein belongs to the alanine racemase family. Pyridoxal 5'-phosphate serves as cofactor.

The enzyme catalyses L-alanine = D-alanine. It functions in the pathway amino-acid biosynthesis; D-alanine biosynthesis; D-alanine from L-alanine: step 1/1. Its function is as follows. Catalyzes the interconversion of L-alanine and D-alanine. May also act on other amino acids. This chain is Alanine racemase (alr), found in Streptococcus pneumoniae (strain Hungary19A-6).